The chain runs to 266 residues: Tryptophan synthase alpha chain (266 aa).

Catalysis depends on proton acceptor residues Glu-49 and Asp-60.

This sequence belongs to the TrpA family. Tetramer of two alpha and two beta chains.

It carries out the reaction (1S,2R)-1-C-(indol-3-yl)glycerol 3-phosphate + L-serine = D-glyceraldehyde 3-phosphate + L-tryptophan + H2O. The protein operates within amino-acid biosynthesis; L-tryptophan biosynthesis; L-tryptophan from chorismate: step 5/5. In terms of biological role, the alpha subunit is responsible for the aldol cleavage of indoleglycerol phosphate to indole and glyceraldehyde 3-phosphate. The sequence is that of Tryptophan synthase alpha chain from Trichormus variabilis (strain ATCC 29413 / PCC 7937) (Anabaena variabilis).